Consider the following 383-residue polypeptide: 1-deoxy-D-xylulose 5-phosphate reductoisomerase (383 aa).

Positions 10, 11, 12, 13, 36, 37, 38, and 122 each coordinate NADPH. Lys123 provides a ligand contact to 1-deoxy-D-xylulose 5-phosphate. Glu124 is an NADPH binding site. Asp148 contributes to the Mn(2+) binding site. Residues Ser149, Glu150, Ser174, and His197 each coordinate 1-deoxy-D-xylulose 5-phosphate. Glu150 is a binding site for Mn(2+). Residue Gly203 participates in NADPH binding. The 1-deoxy-D-xylulose 5-phosphate site is built by Ser210, Asn215, Lys216, and Glu219. Glu219 is a Mn(2+) binding site.

Belongs to the DXR family. The cofactor is Mg(2+). It depends on Mn(2+) as a cofactor.

It catalyses the reaction 2-C-methyl-D-erythritol 4-phosphate + NADP(+) = 1-deoxy-D-xylulose 5-phosphate + NADPH + H(+). Its pathway is isoprenoid biosynthesis; isopentenyl diphosphate biosynthesis via DXP pathway; isopentenyl diphosphate from 1-deoxy-D-xylulose 5-phosphate: step 1/6. Catalyzes the NADPH-dependent rearrangement and reduction of 1-deoxy-D-xylulose-5-phosphate (DXP) to 2-C-methyl-D-erythritol 4-phosphate (MEP). This is 1-deoxy-D-xylulose 5-phosphate reductoisomerase from Bacillus subtilis (strain 168).